Consider the following 974-residue polypeptide: Membrane-associated phosphatidylinositol transfer protein 3 (974 aa).

Residues S30, S31, S109, S295, S298, S321, S343, and S495 each carry the phosphoserine modification. Residues G284–V304 form a disordered region. The segment covering R292–T302 has biased composition (polar residues). Disordered regions lie at residues I323 to S346 and S491 to P536. The 205-residue stretch at F390–R594 folds into the DDHD domain. A compositionally biased stretch (low complexity) spans E520–S533. Phosphoserine occurs at positions 612, 907, 928, and 946. The segment at M927–P974 is disordered.

It belongs to the PtdIns transfer protein family. PI transfer class IIA subfamily. In terms of assembly, interacts with PTK2B via its C-terminus. Detected in brain and spleen, and at low levels in ovary.

Its subcellular location is the endomembrane system. Catalyzes the transfer of phosphatidylinositol and phosphatidylcholine between membranes (in vitro). Binds calcium ions. The polypeptide is Membrane-associated phosphatidylinositol transfer protein 3 (PITPNM3) (Homo sapiens (Human)).